A 316-amino-acid polypeptide reads, in one-letter code: Conjugated bile acid hydrolase (316 aa).

Cys2 functions as the Nucleophile in the catalytic mechanism. Residues Cys2 and Arg18 each coordinate deoxycholate. Asn81 contributes to the taurine binding site.

Belongs to the peptidase C59 family.

It carries out the reaction cholate + taurine = taurocholate + H2O. The enzyme catalyses taurodeoxycholate + H2O = deoxycholate + taurine. The catalysed reaction is taurochenodeoxycholate + H2O = chenodeoxycholate + taurine. It catalyses the reaction glycocholate + H2O = cholate + glycine. It participates in lipid metabolism; bile acid biosynthesis. Glycocholate hydrolysis is inhibited by various previously identified BSH inhibitors, including KIO(3), NaHIO(3), NaIO(4), CuCl(2), menadione, riboflavin, gossypetin, and the antibiotics oxytetracycline, demeclocycline hydrochloride and methacycline hydrochloride. Functionally, bile salt hydrolase that catalyzes the deconjugation of glycine- and taurine-linked bile salts, which occurs naturally in the intestines of animals, releasing amino acid residues and deconjugated bile salts (bile acids). Can hydrolyze the amide bond in the bile salts taurocholate (TCA), taurodeoxycholate (TDCA), taurochenodeoxycholate (TCDCA), taurohyodeoxycholate (THDCA) and tauroursodeoxycholate (TUDCA). Oh et al. did not detect activity with the glycine-conjugated bile salts glycocholate (GCA), glycodeoxycholate (GDCA) and glycochenodeoxycholate (GCDCA). However, a later study shows activity toward glycocholate (GCA). In Lactobacillus acidophilus, this protein is Conjugated bile acid hydrolase.